The primary structure comprises 3093 residues: Genome polyprotein (3093 aa).

Residues lysine 255–tyrosine 403 form the Peptidase S30 domain. Active-site for P1 proteinase activity residues include histidine 311, aspartate 323, and serine 355. The Peptidase C6 domain occupies histidine 690 to glycine 809. Catalysis depends on for helper component proteinase activity residues cysteine 698 and histidine 769. One can recognise a Helicase ATP-binding domain in the interval arginine 1215 to leucine 1366. Residue glycine 1228–serine 1235 participates in ATP binding. The short motif at aspartate 1316–histidine 1319 is the DEVH box element. The 180-residue stretch at proline 1367–asparagine 1546 folds into the Helicase C-terminal domain. Positions aspartate 1883–glutamine 1895 match the Nuclear localization signal motif. Tyrosine 1915 carries the O-(5'-phospho-RNA)-tyrosine modification. Positions serine 2041 to asparagine 2257 constitute a Peptidase C4 domain. Catalysis depends on for nuclear inclusion protein A activity residues histidine 2082, aspartate 2121, and cysteine 2193. In terms of domain architecture, RdRp catalytic spans glutamate 2516–valine 2639. Positions asparagine 2800 to proline 2826 are enriched in low complexity. Residues asparagine 2800–isoleucine 2842 form a disordered region.

Belongs to the potyviridae genome polyprotein family. VPg is uridylylated by the polymerase and is covalently attached to the 5'-end of the genomic RNA. This uridylylated form acts as a nucleotide-peptide primer for the polymerase. Post-translationally, genome polyprotein of potyviruses undergoes post-translational proteolytic processing by the main proteinase NIa-pro resulting in the production of at least ten individual proteins. The P1 proteinase and the HC-pro cleave only their respective C-termini autocatalytically. 6K1 is essential for proper proteolytic separation of P3 from CI.

It localises to the host cytoplasmic vesicle. Its subcellular location is the virion. It carries out the reaction RNA(n) + a ribonucleoside 5'-triphosphate = RNA(n+1) + diphosphate. It catalyses the reaction Hydrolyzes glutaminyl bonds, and activity is further restricted by preferences for the amino acids in P6 - P1' that vary with the species of potyvirus, e.g. Glu-Xaa-Xaa-Tyr-Xaa-Gln-|-(Ser or Gly) for the enzyme from tobacco etch virus. The natural substrate is the viral polyprotein, but other proteins and oligopeptides containing the appropriate consensus sequence are also cleaved.. The catalysed reaction is Hydrolyzes a Gly-|-Gly bond at its own C-terminus, commonly in the sequence -Tyr-Xaa-Val-Gly-|-Gly, in the processing of the potyviral polyprotein.. Its function is as follows. Required for aphid transmission and also has proteolytic activity. Only cleaves a Gly-Gly dipeptide at its own C-terminus. Interacts with virions and aphid stylets. Acts as a suppressor of RNA-mediated gene silencing, also known as post-transcriptional gene silencing (PTGS), a mechanism of plant viral defense that limits the accumulation of viral RNAs. May have RNA-binding activity. Has helicase activity. It may be involved in replication. In terms of biological role, indispensable for virus replication. Reduces the abundance of host transcripts related to jasmonic acid biosynthesis therefore altering the host defenses. In order to increase its own stability, decreases host protein degradation pathways. Functionally, indispensable for virus replication. Its function is as follows. Mediates the cap-independent, EIF4E-dependent translation of viral genomic RNAs. Binds to the cap-binding site of host EIF4E and thus interferes with the host EIF4E-dependent mRNA export and translation. VPg-RNA directly binds EIF4E and is a template for transcription. Also forms trimeric complexes with EIF4E-EIF4G, which are templates for translation. Has RNA-binding and proteolytic activities. In terms of biological role, an RNA-dependent RNA polymerase that plays an essential role in the virus replication. Functionally, involved in aphid transmission, cell-to-cell and systemis movement, encapsidation of the viral RNA and in the regulation of viral RNA amplification. This chain is Genome polyprotein, found in Brome streak virus (strain 11-Cal) (BStV).